The chain runs to 181 residues: UPF0177 protein YbdI (181 aa).

The next 5 helical transmembrane spans lie at 10 to 30, 41 to 61, 81 to 101, 114 to 134, and 161 to 181; these read ILFL…GVFA, LLWL…AHYL, FVDS…IAPI, FFSH…LIHT, and SDSI…HIII.

This sequence belongs to the UPF0177 family.

It is found in the cell membrane. This is UPF0177 protein YbdI (ybdI) from Lactococcus lactis subsp. lactis (strain IL1403) (Streptococcus lactis).